A 482-amino-acid polypeptide reads, in one-letter code: UDP-N-acetylmuramoyl-L-alanyl-D-glutamate--2,6-diaminopimelate ligase (482 aa).

A UDP-N-acetyl-alpha-D-muramoyl-L-alanyl-D-glutamate-binding site is contributed by serine 29. 109-115 is a binding site for ATP; it reads GTNGKTS. UDP-N-acetyl-alpha-D-muramoyl-L-alanyl-D-glutamate-binding positions include 151–152, serine 178, and arginine 186; that span reads TT. Lysine 218 bears the N6-carboxylysine mark. Meso-2,6-diaminopimelate-binding positions include arginine 375, 399-402, glycine 451, and glutamate 455; that span reads DNPR. Positions 399-402 match the Meso-diaminopimelate recognition motif motif; it reads DNPR.

It belongs to the MurCDEF family. MurE subfamily. It depends on Mg(2+) as a cofactor. Post-translationally, carboxylation is probably crucial for Mg(2+) binding and, consequently, for the gamma-phosphate positioning of ATP.

The protein resides in the cytoplasm. It carries out the reaction UDP-N-acetyl-alpha-D-muramoyl-L-alanyl-D-glutamate + meso-2,6-diaminopimelate + ATP = UDP-N-acetyl-alpha-D-muramoyl-L-alanyl-gamma-D-glutamyl-meso-2,6-diaminopimelate + ADP + phosphate + H(+). The protein operates within cell wall biogenesis; peptidoglycan biosynthesis. Catalyzes the addition of meso-diaminopimelic acid to the nucleotide precursor UDP-N-acetylmuramoyl-L-alanyl-D-glutamate (UMAG) in the biosynthesis of bacterial cell-wall peptidoglycan. The polypeptide is UDP-N-acetylmuramoyl-L-alanyl-D-glutamate--2,6-diaminopimelate ligase (Caldanaerobacter subterraneus subsp. tengcongensis (strain DSM 15242 / JCM 11007 / NBRC 100824 / MB4) (Thermoanaerobacter tengcongensis)).